Here is a 460-residue protein sequence, read N- to C-terminus: Argininosuccinate lyase (460 aa).

It belongs to the lyase 1 family. Argininosuccinate lyase subfamily.

The protein resides in the cytoplasm. The catalysed reaction is 2-(N(omega)-L-arginino)succinate = fumarate + L-arginine. It participates in amino-acid biosynthesis; L-arginine biosynthesis; L-arginine from L-ornithine and carbamoyl phosphate: step 3/3. This chain is Argininosuccinate lyase, found in Mannheimia succiniciproducens (strain KCTC 0769BP / MBEL55E).